The primary structure comprises 212 residues: ATP-dependent dethiobiotin synthetase BioD (212 aa).

Residue G13–V18 participates in ATP binding. Position 17 (T17) interacts with Mg(2+). The active site involves K33. S37 contacts substrate. Residue E100 coordinates Mg(2+). ATP is bound by residues E100–G103 and P184–L186.

Belongs to the dethiobiotin synthetase family. In terms of assembly, homodimer. The cofactor is Mg(2+).

It is found in the cytoplasm. The enzyme catalyses (7R,8S)-7,8-diammoniononanoate + CO2 + ATP = (4R,5S)-dethiobiotin + ADP + phosphate + 3 H(+). It participates in cofactor biosynthesis; biotin biosynthesis; biotin from 7,8-diaminononanoate: step 1/2. Its function is as follows. Catalyzes a mechanistically unusual reaction, the ATP-dependent insertion of CO2 between the N7 and N8 nitrogen atoms of 7,8-diaminopelargonic acid (DAPA, also called 7,8-diammoniononanoate) to form a ureido ring. The chain is ATP-dependent dethiobiotin synthetase BioD from Brucella canis (strain ATCC 23365 / NCTC 10854 / RM-666).